The sequence spans 175 residues: Large ribosomal subunit protein uL10 (175 aa).

The protein belongs to the universal ribosomal protein uL10 family. As to quaternary structure, part of the ribosomal stalk of the 50S ribosomal subunit. The N-terminus interacts with L11 and the large rRNA to form the base of the stalk. The C-terminus forms an elongated spine to which L12 dimers bind in a sequential fashion forming a multimeric L10(L12)X complex.

Forms part of the ribosomal stalk, playing a central role in the interaction of the ribosome with GTP-bound translation factors. The polypeptide is Large ribosomal subunit protein uL10 (Methylobacterium nodulans (strain LMG 21967 / CNCM I-2342 / ORS 2060)).